Consider the following 267-residue polypeptide: MKPTILLYDSGMGGLTIYDAIRQTLPNAHYLYCFDNAYFPYSERSENVLIEQAVKIVQKIAEKYPLDMVVVACNTASTVVLPALREKFAFPIVGTVPAIKPAAAISQTKTIGLLATKGTVERPYVAELIEKYAKDCIVEKIGTTTLVELVEEKIRTGNVDQDRLSKVVAEWQTHPTLDTVILGCTHFPLVKQELQQLLPKVKFFIDPGNGIANRVATLLSEFSLENSAQNKENIAFCTKMDEEFSKREIIMQQWGFKRLELLNLSQK.

Substrate contacts are provided by residues Asp-9–Ser-10 and Tyr-41–Ser-42. Cys-73 acts as the Proton donor/acceptor in catalysis. Asn-74–Thr-75 contributes to the substrate binding site. Catalysis depends on Cys-184, which acts as the Proton donor/acceptor. Thr-185 to His-186 is a binding site for substrate.

Belongs to the aspartate/glutamate racemases family.

The enzyme catalyses L-glutamate = D-glutamate. Its pathway is cell wall biogenesis; peptidoglycan biosynthesis. Provides the (R)-glutamate required for cell wall biosynthesis. This chain is Glutamate racemase, found in Actinobacillus pleuropneumoniae serotype 7 (strain AP76).